Reading from the N-terminus, the 128-residue chain is Protein Wnt-8 (128 aa).

Serine 1 is lipidated: O-palmitoleoyl serine. Cystine bridges form between cysteine 71-cysteine 109 and cysteine 87-cysteine 102. N-linked (GlcNAc...) asparagine glycans are attached at residues asparagine 74 and asparagine 93.

This sequence belongs to the Wnt family. In terms of processing, palmitoleoylation is required for efficient binding to frizzled receptors. Depalmitoleoylation leads to Wnt signaling pathway inhibition. Post-translationally, proteolytic processing by tiki1 and tiki2 promotes oxidation and formation of large disulfide-bond oligomers, leading to inactivation of wnt8.

It is found in the secreted. The protein resides in the extracellular space. Its subcellular location is the extracellular matrix. Its function is as follows. Ligand for members of the frizzled family of seven transmembrane receptors. Probable developmental protein. May be a signaling molecule which affects the development of discrete regions of tissues. Is likely to signal over only few cell diameters. The sequence is that of Protein Wnt-8 (wnt8) from Thunnus thynnus (Atlantic bluefin tuna).